Reading from the N-terminus, the 166-residue chain is Large ribosomal subunit protein uL10 (166 aa).

This sequence belongs to the universal ribosomal protein uL10 family. As to quaternary structure, part of the ribosomal stalk of the 50S ribosomal subunit. The N-terminus interacts with L11 and the large rRNA to form the base of the stalk. The C-terminus forms an elongated spine to which L12 dimers bind in a sequential fashion forming a multimeric L10(L12)X complex.

Forms part of the ribosomal stalk, playing a central role in the interaction of the ribosome with GTP-bound translation factors. The sequence is that of Large ribosomal subunit protein uL10 from Ureaplasma urealyticum serovar 10 (strain ATCC 33699 / Western).